The primary structure comprises 193 residues: Iron-sulfur flavoprotein MJ1083 (193 aa).

[4Fe-4S] cluster-binding residues include Cys-47, Cys-50, Cys-53, and Cys-59.

The protein belongs to the SsuE family. Isf subfamily. As to quaternary structure, homodimer. Requires FMN as cofactor. It depends on [4Fe-4S] cluster as a cofactor.

Redox-active protein probably involved in electron transport. In Methanocaldococcus jannaschii (strain ATCC 43067 / DSM 2661 / JAL-1 / JCM 10045 / NBRC 100440) (Methanococcus jannaschii), this protein is Iron-sulfur flavoprotein MJ1083.